The sequence spans 891 residues: DNA mismatch repair protein MutS (891 aa).

634–641 (GPNMGGKS) is an ATP binding site.

Belongs to the DNA mismatch repair MutS family.

Its function is as follows. This protein is involved in the repair of mismatches in DNA. It is possible that it carries out the mismatch recognition step. This protein has a weak ATPase activity. The chain is DNA mismatch repair protein MutS from Burkholderia mallei (strain NCTC 10247).